A 382-amino-acid polypeptide reads, in one-letter code: Manganese peroxidase H4 (382 aa).

Positions 1–24 are cleaved as a signal peptide; it reads MAFGSLLAFVALAAITRAAPTAES. 5 disulfides stabilise this stretch: Cys27-Cys39, Cys38-Cys313, Cys57-Cys141, Cys277-Cys344, and Cys366-Cys373. Mn(2+)-binding residues include Glu59 and Glu63. Residue His70 is the Proton acceptor of the active site. Ca(2+)-binding residues include Asp71, Gly86, Asp88, and Ser90. 2 N-linked (GlcNAc...) asparagine glycosylation sites follow: Asn100 and Asn155. His197 is a binding site for heme b. A Ca(2+)-binding site is contributed by Thr198. Asp203 serves as a coordination point for Mn(2+). Positions 215, 217, 220, and 222 each coordinate Ca(2+). Asn241 is a glycosylation site (N-linked (GlcNAc...) asparagine).

Belongs to the peroxidase family. Ligninase subfamily. Requires heme b as cofactor. The cofactor is Ca(2+).

It is found in the secreted. The catalysed reaction is 2 Mn(2+) + H2O2 + 2 H(+) = 2 Mn(3+) + 2 H2O. Functionally, catalyzes the oxidation of Mn(2+) to Mn(3+). The latter, acting as a diffusible redox mediator, is capable of oxidizing a variety of lignin compounds. In Phanerodontia chrysosporium (White-rot fungus), this protein is Manganese peroxidase H4.